A 629-amino-acid chain; its full sequence is Putative polypeptide N-acetylgalactosaminyltransferase 10 (629 aa).

Topologically, residues 1–12 are cytoplasmic; sequence MGLSRYLSRRHH. Residues 13 to 33 form a helical; Signal-anchor for type II membrane protein membrane-spanning segment; it reads WVIQYCALLLFLYFIYSYVAV. At 34 to 629 the chain is on the lumenal side; sequence SNDAPRLNEE…RQANEHKELE (596 aa). 2 N-linked (GlcNAc...) asparagine glycosylation sites follow: N143 and N177. 5 disulfides stabilise this stretch: C154–C385, C376–C454, C493–C510, C539–C556, and C582–C598. Residues 163-275 are catalytic subdomain A; that stretch reads LPTVSVIFPF…YNWLPPLLDP (113 aa). 2 residues coordinate substrate: D204 and R236. Residues D259 and H261 each coordinate Mn(2+). Residues 331–393 form a catalytic subdomain B region; the sequence is PFDSPVMAGG…PCSRVAHIYR (63 aa). Substrate is bound at residue W362. Position 390 (H390) interacts with Mn(2+). R393 provides a ligand contact to substrate. The interval 393–406 is flexible loop; it reads RCKYAPFKNAGMGD. The Ricin B-type lectin domain occupies 526-629; that stretch reads TRWHDIRPKG…RQANEHKELE (104 aa).

The protein belongs to the glycosyltransferase 2 family. GalNAc-T subfamily. Mn(2+) is required as a cofactor.

The protein localises to the golgi apparatus membrane. It catalyses the reaction L-seryl-[protein] + UDP-N-acetyl-alpha-D-galactosamine = a 3-O-[N-acetyl-alpha-D-galactosaminyl]-L-seryl-[protein] + UDP + H(+). It carries out the reaction L-threonyl-[protein] + UDP-N-acetyl-alpha-D-galactosamine = a 3-O-[N-acetyl-alpha-D-galactosaminyl]-L-threonyl-[protein] + UDP + H(+). It functions in the pathway protein modification; protein glycosylation. In terms of biological role, may catalyze the initial reaction in O-linked oligosaccharide biosynthesis, the transfer of an N-acetyl-D-galactosamine residue to a serine or threonine residue on the protein receptor. The protein is Putative polypeptide N-acetylgalactosaminyltransferase 10 of Caenorhabditis briggsae.